A 251-amino-acid chain; its full sequence is Imidazole glycerol phosphate synthase subunit HisF (251 aa).

Active-site residues include aspartate 11 and aspartate 130.

The protein belongs to the HisA/HisF family. As to quaternary structure, heterodimer of HisH and HisF.

Its subcellular location is the cytoplasm. The catalysed reaction is 5-[(5-phospho-1-deoxy-D-ribulos-1-ylimino)methylamino]-1-(5-phospho-beta-D-ribosyl)imidazole-4-carboxamide + L-glutamine = D-erythro-1-(imidazol-4-yl)glycerol 3-phosphate + 5-amino-1-(5-phospho-beta-D-ribosyl)imidazole-4-carboxamide + L-glutamate + H(+). Its pathway is amino-acid biosynthesis; L-histidine biosynthesis; L-histidine from 5-phospho-alpha-D-ribose 1-diphosphate: step 5/9. Functionally, IGPS catalyzes the conversion of PRFAR and glutamine to IGP, AICAR and glutamate. The HisF subunit catalyzes the cyclization activity that produces IGP and AICAR from PRFAR using the ammonia provided by the HisH subunit. The protein is Imidazole glycerol phosphate synthase subunit HisF of Flavobacterium psychrophilum (strain ATCC 49511 / DSM 21280 / CIP 103535 / JIP02/86).